Here is a 177-residue protein sequence, read N- to C-terminus: N5-carboxyaminoimidazole ribonucleotide mutase (177 aa).

Substrate is bound by residues Ser18, Asp21, and Arg48.

The protein belongs to the AIR carboxylase family. Class I subfamily.

The enzyme catalyses 5-carboxyamino-1-(5-phospho-D-ribosyl)imidazole + H(+) = 5-amino-1-(5-phospho-D-ribosyl)imidazole-4-carboxylate. It participates in purine metabolism; IMP biosynthesis via de novo pathway; 5-amino-1-(5-phospho-D-ribosyl)imidazole-4-carboxylate from 5-amino-1-(5-phospho-D-ribosyl)imidazole (N5-CAIR route): step 2/2. Its function is as follows. Catalyzes the conversion of N5-carboxyaminoimidazole ribonucleotide (N5-CAIR) to 4-carboxy-5-aminoimidazole ribonucleotide (CAIR). The sequence is that of N5-carboxyaminoimidazole ribonucleotide mutase from Pyrococcus horikoshii (strain ATCC 700860 / DSM 12428 / JCM 9974 / NBRC 100139 / OT-3).